The sequence spans 1079 residues: MTSATPLPVLPDYAELHCISNFTFLTGASHPSELVERAKLYGYQALALTDECSVAGTARALVASKEHELKLIIGSRFTVRNADGEPWLRLVLLAQNIEGYGNLSEIITHARLAAPKGEYRLLADDLASPQGELAHLRGAPDCLAILLPDYDPDPQQLLAQAWWCQRVFGDRLSIALELPLRHADDRHRGTVLAVSEQIDVPMVATGGVQMHTRQRKPLHDVLTAIRLSKPLSECGLELAPSAEQAMRTRMQLAFLYQGEGGEKILRRTVELAALCNFSLDEIEYEYPSEVVPEGMTPAEYLRAETFAGAARRYPNGVSEKVHAQIEEELGLIAELGYEPFFLTVYDVVKFARNEGILCQGRGSAANSAVCYCLGITEVNPDSGNTLFARFLSRARNEPPDIDVDFEHQRREEVIQYIYKKYGVTRTALAAALITYRTRSALRDVGRALGIDLGIVEQVAKGQAWWDSRKEFAQRAGQQGLDPESPLVLRWAQLVDQLRGFPRHLSQHVGGFVIAQGKLSRLVPIENAAMENRRVIQWDKDDLESLRLLKVDVLALGMLTAIRRTLDMVDALPGRREHYGATAKLAMQNLPDDDTETYDMICRAETIGVFQIESRAQQSMLPRLRPREYYDLVIQVAIVRPGPIQGGMVHPYLQRREAKRNGNTDCVTYPGPEVKAVLERTLGVPIFQEQVMEIAMKAGDFTADDADRLRRDMAAWKRKGNLTQHQERLVHAMVVKRRYDPAFVEALCKQMEGFAEYGFPESHAAGFAKLAYVSSFLKCHEPAAFFAALLNSQPMGFYSPSQLVQEARRSHVRVLPADVTASVWDSTLHPRADGETGEDGLVQPDIRLGLNRIRGMRKPAAERIEAARAQAPFTSVEDLAHRAALDRHDLNVLAAANALKSLAGHRRQALWQTLALQEPGHDHALLRQARPVEAPLELPAPPIGEEVMADYGSLGLSLQSHPVELLRARLERMRFATAATLAGYRNGQLARACGIVTVRQRPGTANGTIFVSIEDETGAINVILWPHLIERQRREVLNAQLLGVYGKWQCERETRHLVAQHLVDLTPLLGRLATSSRDFH.

This sequence belongs to the DNA polymerase type-C family. DnaE2 subfamily.

It localises to the cytoplasm. It carries out the reaction DNA(n) + a 2'-deoxyribonucleoside 5'-triphosphate = DNA(n+1) + diphosphate. Functionally, DNA polymerase involved in damage-induced mutagenesis and translesion synthesis (TLS). It is not the major replicative DNA polymerase. This Ralstonia pickettii (strain 12J) protein is Error-prone DNA polymerase.